Reading from the N-terminus, the 129-residue chain is Small ribosomal subunit protein uS11 (129 aa).

This sequence belongs to the universal ribosomal protein uS11 family. In terms of assembly, part of the 30S ribosomal subunit. Interacts with proteins S7 and S18. Binds to IF-3.

In terms of biological role, located on the platform of the 30S subunit, it bridges several disparate RNA helices of the 16S rRNA. Forms part of the Shine-Dalgarno cleft in the 70S ribosome. The protein is Small ribosomal subunit protein uS11 of Sphingopyxis alaskensis (strain DSM 13593 / LMG 18877 / RB2256) (Sphingomonas alaskensis).